Here is a 149-residue protein sequence, read N- to C-terminus: Large ribosomal subunit protein bL9 (149 aa).

It belongs to the bacterial ribosomal protein bL9 family.

Its function is as follows. Binds to the 23S rRNA. The polypeptide is Large ribosomal subunit protein bL9 (Alkaliphilus metalliredigens (strain QYMF)).